The following is a 100-amino-acid chain: Nucleoid-associated protein HPG27_32 (100 aa).

Belongs to the YbaB/EbfC family. Homodimer.

Its subcellular location is the cytoplasm. It localises to the nucleoid. Functionally, binds to DNA and alters its conformation. May be involved in regulation of gene expression, nucleoid organization and DNA protection. This Helicobacter pylori (strain G27) protein is Nucleoid-associated protein HPG27_32.